Here is a 191-residue protein sequence, read N- to C-terminus: MATPNRLWMALLLLGVLGVLQTPAPAQAALQPNFEEDKFLGRWFTSGLASNSSWFLEKKKVLSMCKSVVAPAADGGLNLTSTFLRKDQCETRTLLLRPAGPPGCYSYTSPHWSSTHEVSVAETDYETYALLYTEGVRGPGQDFRMATLYSRSQNPRAEVKEHFTTFAKSLGFTEEGIVFLPKTDKCMEEHP.

Positions 1–28 are cleaved as a signal peptide; the sequence is MATPNRLWMALLLLGVLGVLQTPAPAQA. N51 carries N-linked (GlcNAc...) asparagine glycosylation. C65 acts as the Nucleophile in catalysis. A glycan (N-linked (GlcNAc...) asparagine) is linked at N78. A disulfide bond links C89 and C186.

Belongs to the calycin superfamily. Lipocalin family. As to quaternary structure, monomer. As to expression, in the male reproductive system, expressed in the testis, epididymis and prostate, and secreted into the seminal fluid.

The protein resides in the rough endoplasmic reticulum. Its subcellular location is the nucleus membrane. It is found in the golgi apparatus. The protein localises to the cytoplasm. It localises to the perinuclear region. The protein resides in the secreted. The catalysed reaction is prostaglandin H2 = prostaglandin D2. In terms of biological role, catalyzes the conversion of PGH2 to PGD2, a prostaglandin involved in smooth muscle contraction/relaxation and a potent inhibitor of platelet aggregation. Involved in a variety of CNS functions, such as sedation, NREM sleep and PGE2-induced allodynia, and may have an anti-apoptotic role in oligodendrocytes. Binds small non-substrate lipophilic molecules, including biliverdin, bilirubin, retinal, retinoic acid and thyroid hormone, and may act as a scavenger for harmful hydrophobic molecules and as a secretory retinoid and thyroid hormone transporter. Possibly involved in development and maintenance of the blood-brain, blood-retina, blood-aqueous humor and blood-testis barrier. It is likely to play important roles in both maturation and maintenance of the central nervous system and male reproductive system. Involved in PLA2G3-dependent maturation of mast cells. PLA2G3 is secreted by immature mast cells and acts on nearby fibroblasts upstream to PTDGS to synthesize PGD2, which in turn promotes mast cell maturation and degranulation via PTGDR. The protein is Prostaglandin-H2 D-isomerase (PTGDS) of Bos taurus (Bovine).